A 764-amino-acid polypeptide reads, in one-letter code: 5-methyltetrahydropteroyltriglutamate--homocysteine methyltransferase (764 aa).

5-methyltetrahydropteroyltri-L-glutamate-binding positions include R16–K19 and K121. Residues I440–S442 and E493 contribute to the L-homocysteine site. Residues I440–S442 and E493 contribute to the L-methionine site. Residues R524–C525 and W570 each bind 5-methyltetrahydropteroyltri-L-glutamate. L-homocysteine is bound at residue D608. D608 is a binding site for L-methionine. E614 serves as a coordination point for 5-methyltetrahydropteroyltri-L-glutamate. Residues H650, C652, and E674 each contribute to the Zn(2+) site. H703 (proton donor) is an active-site residue. C735 is a binding site for Zn(2+).

This sequence belongs to the vitamin-B12 independent methionine synthase family. The cofactor is Zn(2+).

It carries out the reaction 5-methyltetrahydropteroyltri-L-glutamate + L-homocysteine = tetrahydropteroyltri-L-glutamate + L-methionine. The protein operates within amino-acid biosynthesis; L-methionine biosynthesis via de novo pathway; L-methionine from L-homocysteine (MetE route): step 1/1. Functionally, catalyzes the transfer of a methyl group from 5-methyltetrahydrofolate to homocysteine resulting in methionine formation. This Burkholderia ambifaria (strain MC40-6) protein is 5-methyltetrahydropteroyltriglutamate--homocysteine methyltransferase.